The chain runs to 1841 residues: Sucrase-isomaltase, intestinal (1841 aa).

The Cytoplasmic portion of the chain corresponds to 1–12; sequence MAKKKFSALEIS. Ser7 carries the phosphoserine; by PKA modification. The helical; Signal-anchor for type II membrane protein transmembrane segment at 13–32 threads the bilayer; that stretch reads LIVLFIIVTAIAIALVTVLA. Residues 33–1841 are Lumenal-facing; sequence TKVPAVEEIK…LDEPIQITWS (1809 aa). Residues 42–81 are disordered; it reads KSPTPTSNSTPTSTPTSTSTPTSTSTPSPGKCPPEQGEPI. A compositionally biased stretch (low complexity) spans 43 to 70; sequence SPTPTSNSTPTSTPTSTSTPTSTSTPSP. The P-type 1 domain maps to 71–120; that stretch reads GKCPPEQGEPINERINCIPEQHPTKAICEERGCCWRPWNNTVIPWCFFAD. 3 disulfide bridges follow: Cys73/Cys104, Cys87/Cys103, and Cys98/Cys116. Residue Asn109 is glycosylated (N-linked (GlcNAc...) asparagine). Residues 120 to 1013 form an isomaltase region; that stretch reads DNHGYNAESI…ELQLNPPNAR (894 aa). Residues Asp274 and Asp398 each contribute to the substrate site. A sulfotyrosine mark is found at Tyr401 and Tyr410. N-linked (GlcNAc...) asparagine glycosylation occurs at Asn464. Asp514 (nucleophile; for isomaltase activity) is an active-site residue. Position 599 (Arg599) interacts with substrate. The For isomaltase activity role is filled by Asp615. An intrachain disulfide couples Cys646 to Cys657. Residue His673 coordinates substrate. Residues Asn758, Asn765, Asn867, and Asn910 are each glycosylated (N-linked (GlcNAc...) asparagine). The region spanning 936-984 is the P-type 2 domain; the sequence is RWCRTFSDNEKFTCYPDVGTATEGTCTQRGCLWQPVSGLSNVPPYYFPP. Positions 1014–1841 are sucrase; it reads IKLPSNPIST…LDEPIQITWS (828 aa). N-linked (GlcNAc...) asparagine glycosylation is found at Asn1240, Asn1308, Asn1345, Asn1359, and Asn1373. Residue Tyr1387 is modified to Sulfotyrosine. Asp1399 functions as the Nucleophile; for sucrase activity in the catalytic mechanism. The For sucrase activity role is filled by Glu1402. Asn1485 carries N-linked (GlcNAc...) asparagine glycosylation. The active-site Proton donor; for sucrase activity is the Asp1512. N-linked (GlcNAc...) asparagine glycosylation is found at Asn1513, Asn1575, Asn1762, and Asn1829.

This sequence belongs to the glycosyl hydrolase 31 family. In terms of assembly, the resulting sucrase and isomaltase subunits stay associated with one another in a complex by non-covalent linkages. Post-translationally, the precursor is proteolytically cleaved when exposed to pancreatic proteases in the intestinal lumen. In terms of processing, sulfated.

It localises to the apical cell membrane. It carries out the reaction Hydrolysis of sucrose and maltose by an alpha-D-glucosidase-type action.. The catalysed reaction is Hydrolysis of (1-&gt;6)-alpha-D-glucosidic linkages in some oligosaccharides produced from starch and glycogen by alpha-amylase, and in isomaltose.. Plays an important role in the final stage of carbohydrate digestion. Isomaltase activity is specific for both alpha-1,4- and alpha-1,6-oligosaccharides. This is Sucrase-isomaltase, intestinal (Si) from Rattus norvegicus (Rat).